The primary structure comprises 466 residues: MKTKPLPTAPMAWAESAVETTTSPRELAGHAPLRRVLRPPIARRDGPVLLGDRAPRRTASTMWLLGIDPAESSPGTRATRDDTEQAVDKILRGARRAGGLTVPGAPRYHLTRQVTLTDLCQPNAEPAGALLLALRHPTDLPHLARHRAPPGRQTERLAEAWGQLLEASALGSGRAESGCARAGLVSFNFLVAACAAAYDARDAAEAVRAHITTNYGGTRAGARLDRFSECLRAMVHTHVFPHEVMRFFGGLVSWVTQDELASVTAVCSGPQEATHTGHPGRPRSAVTIPACAFVDLDAELCLGGPWGAFLYLVFTYRQCRDQELCCVYVVKSQLPPRGLEAALERLFGRLRITNTIHGAEDMTPPPPNRNVDFPLAVPAASSQSPRCSASQVTNPQFVDRLYRWQPDLRGRPTARTCTYAAFAELGVMPDDSPRCLHRTERFGAVGVPVVILEGVVWRAAGWRACA.

Residues 1–29 form a disordered region; the sequence is MKTKPLPTAPMAWAESAVETTTSPRELAG.

Belongs to the herpesviridae TRX1 protein family. Interacts with TRX2, MCP and capsid vertex component 2/CVC2.

It is found in the virion. The protein localises to the host nucleus. Structural component of the T=16 icosahedral capsid. The capsid is composed of pentamers and hexamers of major capsid protein/MCP, which are linked together by heterotrimers called triplexes. These triplexes are formed by a single molecule of triplex protein 1/TRX1 and two copies of triplex protein 2/TRX2. Additionally, TRX1 is required for efficient transport of TRX2 to the nucleus, which is the site of capsid assembly. The sequence is that of Triplex capsid protein 1 from Homo sapiens (Human).